Reading from the N-terminus, the 200-residue chain is Recombination protein RecR (200 aa).

Residues 57–72 form a C4-type zinc finger; the sequence is CSECRTFTEEDTCAIC. The Toprim domain maps to 81 to 176; that stretch reads GEMCIVESPA…PASRIAHGVP (96 aa).

Belongs to the RecR family.

May play a role in DNA repair. It seems to be involved in an RecBC-independent recombinational process of DNA repair. It may act with RecF and RecO. The sequence is that of Recombination protein RecR from Aliivibrio fischeri (strain ATCC 700601 / ES114) (Vibrio fischeri).